We begin with the raw amino-acid sequence, 499 residues long: Pentatricopeptide repeat-containing protein PPR5, chloroplastic (499 aa).

Residues 1-12 (MLACPSTSSPWP) are compositionally biased toward low complexity. The disordered stretch occupies residues 1 to 28 (MLACPSTSSPWPQRQPPSPCPGGGGGAT). The N-terminal 45 residues, 1 to 45 (MLACPSTSSPWPQRQPPSPCPGGGGGATRHVALAARSKRRGAGPA), are a transit peptide targeting the chloroplast. 9 PPR repeats span residues 123 to 157 (DNGI…GCKP), 158 to 193 (DTSV…KCIE), 198 to 232 (TIVT…VVSP), 233 to 267 (DVYT…QCRP), 268 to 302 (DVIT…KERP), 303 to 337 (THPT…GFKP), 338 to 372 (NYVT…QTKV), 373 to 407 (HLSS…CVVP), and 408 to 442 (NGST…GIVP). The segment at 458-499 (DRKPRTSPGINSASKPSTDSAGDSETATSDKPEVSVWHVAAT) is disordered. Over residues 465-484 (PGINSASKPSTDSAGDSETA) the composition is skewed to polar residues.

This sequence belongs to the PPR family. P subfamily.

It localises to the plastid. It is found in the chloroplast. Functionally, involved in the biogenesis of the plastid translation machinery by promoting the splicing of group II introns in chloroplasts. Stabilizes the chloroplast trnG pre-RNA by directly binding to a group II intron, where it protects an endonuclease-sensitive site and stimulates splicing. Binds specific sites within group II intron trnG pre-RNA. Binds with high affinity to the 5'-UTR of the chloroplastic petA mRNA. In Zea mays (Maize), this protein is Pentatricopeptide repeat-containing protein PPR5, chloroplastic.